The following is a 530-amino-acid chain: Chaperonin GroEL (530 aa).

ATP-binding positions include 30-33 (TLGP), K51, 87-91 (DGTTT), G415, and D495.

It belongs to the chaperonin (HSP60) family. In terms of assembly, forms a cylinder of 14 subunits composed of two heptameric rings stacked back-to-back. Interacts with the co-chaperonin GroES.

Its subcellular location is the cytoplasm. The enzyme catalyses ATP + H2O + a folded polypeptide = ADP + phosphate + an unfolded polypeptide.. In terms of biological role, together with its co-chaperonin GroES, plays an essential role in assisting protein folding. The GroEL-GroES system forms a nano-cage that allows encapsulation of the non-native substrate proteins and provides a physical environment optimized to promote and accelerate protein folding. In Carsonella ruddii (strain PV), this protein is Chaperonin GroEL.